The sequence spans 380 residues: L-prolyl-[peptidyl-carrier protein] dehydrogenase (380 aa).

The active-site Proton acceptor is glutamate 243. 2 residues coordinate FAD: arginine 269 and glutamine 280.

It belongs to the acyl-CoA dehydrogenase family. FAD is required as a cofactor.

It catalyses the reaction L-prolyl-[peptidyl-carrier protein] + 2 oxidized [electron-transfer flavoprotein] + H(+) = (1H-pyrrole-2-carbonyl)-[peptidyl-carrier protein] + 2 reduced [electron-transfer flavoprotein]. In terms of biological role, involved in the biosynthesis of pyoluteorin. Catalyzes the desaturation of the L-prolyl-[PltL] to yield 1H-pyrrole-2-carbonyl-[PltL]. This Pseudomonas fluorescens (strain ATCC BAA-477 / NRRL B-23932 / Pf-5) protein is L-prolyl-[peptidyl-carrier protein] dehydrogenase.